We begin with the raw amino-acid sequence, 479 residues long: Glycogen synthase (479 aa).

K15 provides a ligand contact to ADP-alpha-D-glucose.

The protein belongs to the glycosyltransferase 1 family. Bacterial/plant glycogen synthase subfamily.

It catalyses the reaction [(1-&gt;4)-alpha-D-glucosyl](n) + ADP-alpha-D-glucose = [(1-&gt;4)-alpha-D-glucosyl](n+1) + ADP + H(+). Its pathway is glycan biosynthesis; glycogen biosynthesis. Its function is as follows. Synthesizes alpha-1,4-glucan chains using ADP-glucose. The protein is Glycogen synthase of Clostridium novyi (strain NT).